A 223-amino-acid chain; its full sequence is MKPIIPPQNLSELLERANMMAGISLAQIAAHRGIAVPKDLKRDKGWVGQLIEMELGATAGSKPEQDFLHLGVELKTIPIDSKGKPLETTYVCVAPLTNIEGLTWQDSLVCHKLQRVLWVPVEGERHIPVGDRRVGTPILWEPDLQEQRLLQQDWEEIMELIALGKVEKLTARHGEVLQLRPKAANSKALTQSIAEDGSLKMTNPRGFYLKTAFTAMLLNKVFG.

This sequence belongs to the MutH family.

The protein localises to the cytoplasm. Functionally, sequence-specific endonuclease that cleaves unmethylated GATC sequences. It is involved in DNA mismatch repair. The protein is DNA mismatch repair protein MutH of Shewanella sp. (strain ANA-3).